A 298-amino-acid polypeptide reads, in one-letter code: Probable 3-mercaptopyruvate sulfurtransferase (298 aa).

The region spanning Asn24–Thr141 is the Rhodanese 1 domain. The tract at residues Gly142 to Pro175 is hinge. Ser164 carries the post-translational modification Phosphoserine. Positions Asp176–Ser292 constitute a Rhodanese 2 domain. Arg190 serves as a coordination point for substrate. Cys252 acts as the Cysteine persulfide intermediate in catalysis.

Its subcellular location is the mitochondrion. It catalyses the reaction 2-oxo-3-sulfanylpropanoate + [thioredoxin]-dithiol = [thioredoxin]-disulfide + hydrogen sulfide + pyruvate + H(+). In terms of biological role, required for formation of the 2-thio group of the 5-methoxycarbonylmethyl-2-thiouridine modified base in some tRNAs. In Schizosaccharomyces pombe (strain 972 / ATCC 24843) (Fission yeast), this protein is Probable 3-mercaptopyruvate sulfurtransferase (tum1).